A 160-amino-acid polypeptide reads, in one-letter code: Regulatory protein RecX (160 aa).

This sequence belongs to the RecX family.

It is found in the cytoplasm. In terms of biological role, modulates RecA activity. The polypeptide is Regulatory protein RecX (Pelodictyon phaeoclathratiforme (strain DSM 5477 / BU-1)).